A 418-amino-acid polypeptide reads, in one-letter code: Tyrosine--tRNA ligase (418 aa).

Tyr-34 contributes to the L-tyrosine binding site. The 'HIGH' region motif lies at 39-48 (PTADSLHLGH). L-tyrosine-binding residues include Tyr-169 and Gln-173. The 'KMSKS' region signature appears at 229–233 (KFGKS). Lys-232 provides a ligand contact to ATP. Positions 352-418 (LNIVDMLVTA…GKKKYAVLTY (67 aa)) constitute an S4 RNA-binding domain.

This sequence belongs to the class-I aminoacyl-tRNA synthetase family. TyrS type 1 subfamily. Homodimer.

It localises to the cytoplasm. The catalysed reaction is tRNA(Tyr) + L-tyrosine + ATP = L-tyrosyl-tRNA(Tyr) + AMP + diphosphate + H(+). Catalyzes the attachment of tyrosine to tRNA(Tyr) in a two-step reaction: tyrosine is first activated by ATP to form Tyr-AMP and then transferred to the acceptor end of tRNA(Tyr). This Streptococcus equi subsp. zooepidemicus (strain MGCS10565) protein is Tyrosine--tRNA ligase.